A 250-amino-acid polypeptide reads, in one-letter code: GILT-like protein 1 (250 aa).

Positions 1–21 (MSHKIAAVCLLMSCLIATAYS) are cleaved as a signal peptide. Asn-157 is a glycosylation site (N-linked (GlcNAc...) asparagine).

Belongs to the GILT family. Post-translationally, conjugated to URM1, a ubiquitin-like protein.

The protein localises to the secreted. In terms of biological role, involved in the immune response to bacterial infection. This Drosophila melanogaster (Fruit fly) protein is GILT-like protein 1.